Consider the following 783-residue polypeptide: Tricorn protease-interacting factor F2 (783 aa).

Substrate is bound by residues Glu-107 and 236–240 (GAMEN). His-271 contacts Zn(2+). The active-site Proton acceptor is Glu-272. Zn(2+)-binding residues include His-275 and Glu-294.

This sequence belongs to the peptidase M1 family. In terms of assembly, monomer. Part of the Tricorn proteolytic complex. Zn(2+) is required as a cofactor.

The protein localises to the cytoplasm. In terms of biological role, proteases F1, F2 and F3 degrade oligopeptides produced by Tricorn (themselves probably produced by the proteasome), yielding free amino acids. The sequence is that of Tricorn protease-interacting factor F2 (trf2) from Thermoplasma acidophilum (strain ATCC 25905 / DSM 1728 / JCM 9062 / NBRC 15155 / AMRC-C165).